The sequence spans 156 residues: Lipoprotein signal peptidase (156 aa).

3 consecutive transmembrane segments (helical) span residues 5–25, 63–83, and 90–110; these read FFVVYLIAALVIAVDQWTKQW, IEWQFWLFFAAAVTAVLAIIA, and SNPYLFTGFGLIMGGAIGNLI. Catalysis depends on residues aspartate 120 and aspartate 138. The helical transmembrane segment at 133–153 threads the bilayer; sequence AFNVADMGICVGAFFVCLAVY.

This sequence belongs to the peptidase A8 family.

The protein resides in the cell inner membrane. It carries out the reaction Release of signal peptides from bacterial membrane prolipoproteins. Hydrolyzes -Xaa-Yaa-Zaa-|-(S,diacylglyceryl)Cys-, in which Xaa is hydrophobic (preferably Leu), and Yaa (Ala or Ser) and Zaa (Gly or Ala) have small, neutral side chains.. It functions in the pathway protein modification; lipoprotein biosynthesis (signal peptide cleavage). Functionally, this protein specifically catalyzes the removal of signal peptides from prolipoproteins. In Oleidesulfovibrio alaskensis (strain ATCC BAA-1058 / DSM 17464 / G20) (Desulfovibrio alaskensis), this protein is Lipoprotein signal peptidase.